A 413-amino-acid chain; its full sequence is MRVLIRPNFLSNLIRYCSRGTHSHDRSLRSVLSSNMIRLYTTGMEPQLSPDLIKIMDQRLSAIEHRNAVLQKLINQPEYSPEEFSRANKELRKLRDSMLLINDLRAKQKEIDGLKSLVSESSDDKDMLDLAVGELDEAVEEEKRLQTLLLKSLLPKDEADERDCILEVRAGTGGEEASLFAMDIFRMYERYSQKKGWKFDIVDITESDMKGYKEASAAICGASVYGKLKFESGIHRVQRIPITEKSGRIHTSAISVAILPQADEVDVQLRNEDLRIDTYRSGGSGGQHANTTNSAVRIIHLPTGMMVSIQDERSQHMNRAKALKVLCARLYEIERLRIQSSRSKLRSDQIGSGDRSGRIRTYNFPQGRVTDHRVGITHHAIEDMMQGENLDMFIDALLLRQEMDAIASFSSTS.

The transit peptide at 1–40 (MRVLIRPNFLSNLIRYCSRGTHSHDRSLRSVLSSNMIRLY) directs the protein to the mitochondrion. The residue at position 287 (glutamine 287) is an N5-methylglutamine.

The protein belongs to the prokaryotic/mitochondrial release factor family. Methylation increases the termination efficiency of RF1. In terms of tissue distribution, mostly expressed in seedlings, stems and adult plants, and, to a lower extent, in siliques. Barely detected in etiolated seedlings and roots.

The protein localises to the mitochondrion. Functionally, peptide chain release factor 1 directs the termination of translation in response to the peptide chain termination codons UAG and UAA in mitochondria. The chain is Peptide chain release factor 1, mitochondrial from Arabidopsis thaliana (Mouse-ear cress).